The following is a 228-amino-acid chain: MTKQAEETQKPIIFAPETYQYDKFTLNEKQLTDDPIDLFTKWFNEAKEDPRETLPEAITFSSAELPSGRVSSRILLFKELDHRGFTIYSNWGTSRKAHDIATNPNAAIVFFWKDLQRQVRVEGITEHVNRETSERYFKTRPRGSKIGAWASRQSDVIKNREELDELTQKNTERFKDAEDIPCPDYWGGLRIVPLEIEFWQGRPSRLHDRFVYRRKTENDPWKVVRLAP.

A pyridoxal 5'-phosphate-binding site is contributed by 20–23 (QYDK). Lys-29 is covalently cross-linked (Glycyl lysine isopeptide (Lys-Gly) (interchain with G-Cter in ubiquitin)). Residue 73–76 (RILL) coordinates FMN. Lys-78 contributes to the pyridoxal 5'-phosphate binding site. Residues 88-89 (YS), 95-96 (RK), and Gln-118 contribute to the FMN site. Residues Tyr-136, Arg-140, and Ser-144 each coordinate pyridoxal 5'-phosphate. Residues 153-154 (QS) and Trp-199 each bind FMN. 205 to 207 (RLH) lines the pyridoxal 5'-phosphate pocket. Arg-209 is a binding site for FMN.

The protein belongs to the pyridoxamine 5'-phosphate oxidase family. Homodimer. Requires FMN as cofactor.

The protein localises to the mitochondrion intermembrane space. The enzyme catalyses pyridoxamine 5'-phosphate + O2 + H2O = pyridoxal 5'-phosphate + H2O2 + NH4(+). It catalyses the reaction pyridoxine 5'-phosphate + O2 = pyridoxal 5'-phosphate + H2O2. It functions in the pathway cofactor metabolism; pyridoxal 5'-phosphate salvage; pyridoxal 5'-phosphate from pyridoxamine 5'-phosphate: step 1/1. Its pathway is cofactor metabolism; pyridoxal 5'-phosphate salvage; pyridoxal 5'-phosphate from pyridoxine 5'-phosphate: step 1/1. Catalyzes the oxidation of either pyridoxine 5'-phosphate (PNP) or pyridoxamine 5'-phosphate (PMP) into pyridoxal 5'-phosphate (PLP). In Saccharomyces cerevisiae (strain ATCC 204508 / S288c) (Baker's yeast), this protein is Pyridoxamine 5'-phosphate oxidase (PDX3).